The sequence spans 391 residues: Ferrochelatase (391 aa).

Fe cation-binding residues include His-196 and Glu-281.

This sequence belongs to the ferrochelatase family.

The protein localises to the cytoplasm. It catalyses the reaction heme b + 2 H(+) = protoporphyrin IX + Fe(2+). Its pathway is porphyrin-containing compound metabolism; protoheme biosynthesis; protoheme from protoporphyrin-IX: step 1/1. In terms of biological role, catalyzes the ferrous insertion into protoporphyrin IX. This Prochlorococcus marinus (strain MIT 9312) protein is Ferrochelatase.